Consider the following 308-residue polypeptide: Bifunctional protein FolD (308 aa).

Position 170–172 (170–172 (GKG)) interacts with NADP(+).

Belongs to the tetrahydrofolate dehydrogenase/cyclohydrolase family. Homodimer.

It catalyses the reaction (6R)-5,10-methylene-5,6,7,8-tetrahydrofolate + NADP(+) = (6R)-5,10-methenyltetrahydrofolate + NADPH. It carries out the reaction (6R)-5,10-methenyltetrahydrofolate + H2O = (6R)-10-formyltetrahydrofolate + H(+). It functions in the pathway one-carbon metabolism; tetrahydrofolate interconversion. Catalyzes the oxidation of 5,10-methylenetetrahydrofolate to 5,10-methenyltetrahydrofolate and then the hydrolysis of 5,10-methenyltetrahydrofolate to 10-formyltetrahydrofolate. The chain is Bifunctional protein FolD from Pyrobaculum calidifontis (strain DSM 21063 / JCM 11548 / VA1).